Reading from the N-terminus, the 216-residue chain is Protein Syd (216 aa).

It belongs to the Syd family.

The protein resides in the cell inner membrane. Its function is as follows. Interacts with the SecY protein in vivo. May bind preferentially to an uncomplexed state of SecY, thus functioning either as a chelating agent for excess SecY in the cell or as a regulatory factor that negatively controls the translocase function. The sequence is that of Protein Syd from Shewanella sp. (strain W3-18-1).